The sequence spans 112 residues: Small ribosomal subunit protein eS24 (112 aa).

The interval 88–112 (RGMAGEEEGNADAQDAPSGDAAEAS) is disordered.

It belongs to the eukaryotic ribosomal protein eS24 family.

This chain is Small ribosomal subunit protein eS24, found in Methanospirillum hungatei JF-1 (strain ATCC 27890 / DSM 864 / NBRC 100397 / JF-1).